Here is a 218-residue protein sequence, read N- to C-terminus: Peptidase E (218 aa).

Residues Ser123, Asp138, and His160 each act as charge relay system in the active site.

It belongs to the peptidase S51 family.

The protein localises to the cytoplasm. It carries out the reaction Dipeptidase E catalyzes the hydrolysis of dipeptides Asp-|-Xaa. It does not act on peptides with N-terminal Glu, Asn or Gln, nor does it cleave isoaspartyl peptides.. Functionally, hydrolyzes dipeptides containing N-terminal aspartate residues. May play a role in allowing the cell to use peptide aspartate to spare carbon otherwise required for the synthesis of the aspartate family of amino acids. The chain is Peptidase E from Haemophilus influenzae (strain ATCC 51907 / DSM 11121 / KW20 / Rd).